The sequence spans 251 residues: MTTRRIIACLDVKDGKVVKGVRFLDLKLKGDPAELASRYEEEGADEIVFLDISATVEGRKTLLEKVRETASVLSIPLTVGGGVRTVEDVSNLLSNGADKVSLNTVAAENPSVVSMASREFGAQAVVVAIDAKRVGNGWRVFVRSGTKDTGLDAVDWAKRVEEMGAGEILLTSIDRDGTRDGYDLELTKAVVRATKVPVIASGGAGKPDHFLSVFRQAGADAALAAGIFHDGVIRIRELKDYLKDAGIEVRT.

Catalysis depends on residues aspartate 11 and aspartate 130.

This sequence belongs to the HisA/HisF family. In terms of assembly, heterodimer of HisH and HisF.

It localises to the cytoplasm. It catalyses the reaction 5-[(5-phospho-1-deoxy-D-ribulos-1-ylimino)methylamino]-1-(5-phospho-beta-D-ribosyl)imidazole-4-carboxamide + L-glutamine = D-erythro-1-(imidazol-4-yl)glycerol 3-phosphate + 5-amino-1-(5-phospho-beta-D-ribosyl)imidazole-4-carboxamide + L-glutamate + H(+). It participates in amino-acid biosynthesis; L-histidine biosynthesis; L-histidine from 5-phospho-alpha-D-ribose 1-diphosphate: step 5/9. In terms of biological role, IGPS catalyzes the conversion of PRFAR and glutamine to IGP, AICAR and glutamate. The HisF subunit catalyzes the cyclization activity that produces IGP and AICAR from PRFAR using the ammonia provided by the HisH subunit. The sequence is that of Imidazole glycerol phosphate synthase subunit HisF from Metallosphaera sedula (strain ATCC 51363 / DSM 5348 / JCM 9185 / NBRC 15509 / TH2).